Reading from the N-terminus, the 368-residue chain is Anaphase-promoting complex subunit MND2 (368 aa).

Disordered stretches follow at residues 140–167 (AQNA…NGSI) and 286–336 (RNPY…GITP). Basic and acidic residues predominate over residues 149 to 162 (EDFRQHDSREEDPR). Residue serine 293 is modified to Phosphoserine.

The protein belongs to the APC15 family. As to quaternary structure, the APC/C is composed of at least 13 subunits that stay tightly associated throughout the cell cycle: APC1, APC2, APC4, APC5, APC9, APC11, CDC16, CDC23, CDC26, CDC27, DOC1, MND2 and SWM1. MND2 interacts directly with APC1, APC5 and CDC23.

Its pathway is protein modification; protein ubiquitination. Component of the anaphase promoting complex/cyclosome (APC/C), a cell cycle-regulated E3 ubiquitin-protein ligase complex that controls progression through mitosis and the G1 phase of the cell cycle. The APC/C is thought to confer substrate specificity and, in the presence of ubiquitin-conjugating E2 enzymes, it catalyzes the formation of protein-ubiquitin conjugates that are subsequently degraded by the 26S proteasome. In early mitosis, the APC/C is activated by CDC20 and targets securin PDS1, the B-type cyclin CLB5, and other anaphase inhibitory proteins for proteolysis, thereby triggering the separation of sister chromatids at the metaphase-to-anaphase transition. In late mitosis and in G1, degradation of CLB5 allows activation of the APC/C by CDH1, which is needed to destroy CDC20 and the B-type cyclin CLB2 to allow exit from mitosis and creating the low CDK state necessary for cytokinesis and for reforming prereplicative complexes in G1 prior to another round of replication. The sequence is that of Anaphase-promoting complex subunit MND2 (MND2) from Saccharomyces cerevisiae (strain ATCC 204508 / S288c) (Baker's yeast).